A 1385-amino-acid polypeptide reads, in one-letter code: DNA-directed RNA polymerase subunit beta'' (1385 aa).

The Zn(2+) site is built by Cys224, Cys294, Cys301, and Cys304.

It belongs to the RNA polymerase beta' chain family. RpoC2 subfamily. In plastids the minimal PEP RNA polymerase catalytic core is composed of four subunits: alpha, beta, beta', and beta''. When a (nuclear-encoded) sigma factor is associated with the core the holoenzyme is formed, which can initiate transcription. The cofactor is Zn(2+).

It localises to the plastid. The protein localises to the chloroplast. It carries out the reaction RNA(n) + a ribonucleoside 5'-triphosphate = RNA(n+1) + diphosphate. Functionally, DNA-dependent RNA polymerase catalyzes the transcription of DNA into RNA using the four ribonucleoside triphosphates as substrates. The protein is DNA-directed RNA polymerase subunit beta'' of Illicium oligandrum (Star anise).